Consider the following 443-residue polypeptide: Phosphoglucosamine mutase (443 aa).

Serine 101 acts as the Phosphoserine intermediate in catalysis. Mg(2+)-binding residues include serine 101, aspartate 239, aspartate 241, and aspartate 243. Serine 101 carries the phosphoserine modification.

Belongs to the phosphohexose mutase family. Mg(2+) serves as cofactor. Activated by phosphorylation.

It carries out the reaction alpha-D-glucosamine 1-phosphate = D-glucosamine 6-phosphate. In terms of biological role, catalyzes the conversion of glucosamine-6-phosphate to glucosamine-1-phosphate. In Francisella tularensis subsp. novicida (strain U112), this protein is Phosphoglucosamine mutase.